We begin with the raw amino-acid sequence, 351 residues long: Protein disulfide isomerase CRELD2 (351 aa).

The signal sequence occupies residues 1-21; it reads MRPPAPAVLGLLLLLLPTGEA. Residues 28 to 31 carry the CXXC motif; the sequence is CKRC. 4 disulfides stabilise this stretch: C28–C31, C137–C151, C145–C163, and C165–C174. Residues 133–175 enclose the EGF-like 1 domain; sequence DCLACQGGSERPCSGNGHCVGDGTREGDGSCQCHLGYQGPLCS. Residues 190 to 237 form an FU 1 repeat; it reads HSICSACDEACKTCVGPTNRDCGQCEVGWVRQDDACVDVDECAAEPPP. N-linked (GlcNAc...) asparagine glycosylation occurs at N248. An FU 2 repeat occupies 250–297; the sequence is SFVCEECDPTCMGCTGKGPTQCRECIAGYSKESGQCEDIDECSLAEKP. The short motif at 260 to 263 is the CXXC element; it reads CMGC. 4 cysteine pairs are disulfide-bonded: C260–C263, C291–C305, C298–C314, and C316–C327. Residues 287-328 form the EGF-like 2; calcium-binding domain; it reads DIDECSLAEKPCLRDNENCYNTPGSFVCVCPDGFEEAEDTCV. A disordered region spans residues 329-351; sequence QTRPAGAEATEASPTQPPSREDL.

This sequence belongs to the CRELD family. Interacts with CHRNA4. Component of a complex containing at least CRELD2, MANF, MATN3 and PDIA4.

Its subcellular location is the endoplasmic reticulum. It carries out the reaction Catalyzes the rearrangement of -S-S- bonds in proteins.. Protein disulfide isomerase. Might play a role in the unfolded protein response. May regulate transport of alpha4-beta2 neuronal acetylcholine receptor. The sequence is that of Protein disulfide isomerase CRELD2 (CRELD2) from Bos taurus (Bovine).